Reading from the N-terminus, the 438-residue chain is UDP-N-acetylmuramoylalanine--D-glutamate ligase (438 aa).

112 to 118 (GSNGKST) is an ATP binding site.

It belongs to the MurCDEF family.

Its subcellular location is the cytoplasm. It catalyses the reaction UDP-N-acetyl-alpha-D-muramoyl-L-alanine + D-glutamate + ATP = UDP-N-acetyl-alpha-D-muramoyl-L-alanyl-D-glutamate + ADP + phosphate + H(+). The protein operates within cell wall biogenesis; peptidoglycan biosynthesis. In terms of biological role, cell wall formation. Catalyzes the addition of glutamate to the nucleotide precursor UDP-N-acetylmuramoyl-L-alanine (UMA). This chain is UDP-N-acetylmuramoylalanine--D-glutamate ligase, found in Yersinia pseudotuberculosis serotype I (strain IP32953).